The primary structure comprises 148 residues: Snaclec 3 (148 aa).

An N-terminal signal peptide occupies residues 1–23 (WGDSSSSASACWSCSSPLSGTEA). Disulfide bonds link Cys27-Cys38, Cys55-Cys144, and Cys121-Cys136. The C-type lectin domain maps to 34-145 (YDQNCYKAFE…CSGTHSFVCK (112 aa)).

It belongs to the snaclec family. As to quaternary structure, heterodimer; disulfide-linked. In terms of tissue distribution, expressed by the venom gland.

It localises to the secreted. Functionally, interferes with one step of hemostasis (modulation of platelet aggregation, or coagulation cascade, for example). The polypeptide is Snaclec 3 (Echis carinatus sochureki (Saw-scaled viper)).